The sequence spans 91 residues: Large ribosomal subunit protein bL27 (91 aa).

It belongs to the bacterial ribosomal protein bL27 family.

This chain is Large ribosomal subunit protein bL27, found in Deinococcus deserti (strain DSM 17065 / CIP 109153 / LMG 22923 / VCD115).